Here is a 1332-residue protein sequence, read N- to C-terminus: DNA-directed RNA polymerase subunit beta' (1332 aa).

Cys60, Cys62, Cys75, and Cys78 together coordinate Zn(2+). Residues Asp535, Asp537, and Asp539 each contribute to the Mg(2+) site. Residues Cys894, Cys977, Cys984, and Cys987 each coordinate Zn(2+).

The protein belongs to the RNA polymerase beta' chain family. The RNAP catalytic core consists of 2 alpha, 1 beta, 1 beta' and 1 omega subunit. When a sigma factor is associated with the core the holoenzyme is formed, which can initiate transcription. Requires Mg(2+) as cofactor. The cofactor is Zn(2+).

The enzyme catalyses RNA(n) + a ribonucleoside 5'-triphosphate = RNA(n+1) + diphosphate. In terms of biological role, DNA-dependent RNA polymerase catalyzes the transcription of DNA into RNA using the four ribonucleoside triphosphates as substrates. This is DNA-directed RNA polymerase subunit beta' from Corynebacterium kroppenstedtii (strain DSM 44385 / JCM 11950 / CIP 105744 / CCUG 35717).